We begin with the raw amino-acid sequence, 349 residues long: Probable FBD-associated F-box protein At5g38565 (349 aa).

An F-box domain is found at 1-47 (MDIFNGLPDDVLVKILSFVPTKVAVSTSILSKRWEFLWMWLPRLDFG). Positions 263 to 311 (CWNQPISVPECLLESLQIFNLSHYFGKQQDLDFVVYILKNACHLKTATI) constitute an FBD domain.

This is Probable FBD-associated F-box protein At5g38565 from Arabidopsis thaliana (Mouse-ear cress).